The primary structure comprises 394 residues: Probable purine permease 23 (394 aa).

The segment covering 1–20 (MEMTEASKHTTTHEESEHVQ) has biased composition (basic and acidic residues). The interval 1 to 24 (MEMTEASKHTTTHEESEHVQNPEP) is disordered. S29 is subject to Phosphoserine. Helical transmembrane passes span 43-63 (ISVL…ILLL), 85-105 (WMQA…FFIF), 124-144 (LILL…LYAL), 152-172 (GFFM…TAII), 180-200 (WIII…PVFS), 211-231 (GIQA…LCLV), 254-274 (VLEM…VGLF), 301-321 (VGLA…VLYV), 328-348 (IVHM…FDFI), and 352-372 (FSWP…SYFY).

Belongs to the purine permeases (TC 2.A.7.14) family.

Its subcellular location is the membrane. This chain is Probable purine permease 23 (PUP23), found in Arabidopsis thaliana (Mouse-ear cress).